The chain runs to 657 residues: Translation factor GUF1, mitochondrial (657 aa).

Residues 1–39 (MRGCLQSVKWLTSALRPSQSLASSTRYPRRLLSTSAPRN) constitute a mitochondrion transit peptide. Residues 59–239 (ERFRNFCIVA…TVIEQIPAPV (181 aa)) form the tr-type G domain. Residues 68 to 75 (AHVDHGKS), 132 to 136 (DTPGH), and 186 to 189 (NKVD) contribute to the GTP site.

Belongs to the TRAFAC class translation factor GTPase superfamily. Classic translation factor GTPase family. LepA subfamily.

The protein resides in the mitochondrion inner membrane. The enzyme catalyses GTP + H2O = GDP + phosphate + H(+). Functionally, promotes mitochondrial protein synthesis. May act as a fidelity factor of the translation reaction, by catalyzing a one-codon backward translocation of tRNAs on improperly translocated ribosomes. Binds to mitochondrial ribosomes in a GTP-dependent manner. The sequence is that of Translation factor GUF1, mitochondrial from Ajellomyces capsulatus (strain G186AR / H82 / ATCC MYA-2454 / RMSCC 2432) (Darling's disease fungus).